The following is a 404-amino-acid chain: Glucose-1-phosphate adenylyltransferase (404 aa).

Alpha-D-glucose 1-phosphate-binding positions include Y99, G164, E179–K180, and S197.

The protein belongs to the bacterial/plant glucose-1-phosphate adenylyltransferase family.

It catalyses the reaction alpha-D-glucose 1-phosphate + ATP + H(+) = ADP-alpha-D-glucose + diphosphate. It functions in the pathway glycan biosynthesis; glycogen biosynthesis. Its function is as follows. Involved in the biosynthesis of ADP-glucose, a building block, required in the biosynthesis of maltose-1-phosphate (M1P) and in the elongation reactions to produce linear alpha-1,4-glucans. Catalyzes the reaction between ATP and alpha-D-glucose 1-phosphate (G1P) to produce pyrophosphate and ADP-Glc. The sequence is that of Glucose-1-phosphate adenylyltransferase from Mycolicibacterium gilvum (strain PYR-GCK) (Mycobacterium gilvum (strain PYR-GCK)).